Consider the following 313-residue polypeptide: ADP-L-glycero-D-manno-heptose-6-epimerase (313 aa).

Residues 10–11 (MI), 31–32 (DN), Lys-38, Arg-53, 75–79 (EGACS), and Asn-92 each bind NADP(+). The active-site Proton acceptor is the Tyr-139. Residue Lys-143 coordinates NADP(+). Asn-174 contacts substrate. 2 residues coordinate NADP(+): Val-175 and Lys-183. The active-site Proton acceptor is Lys-183. Residues Ser-185, His-192, 206-209 (FEGS), Arg-214, and Tyr-277 each bind substrate.

It belongs to the NAD(P)-dependent epimerase/dehydratase family. HldD subfamily. Homopentamer. It depends on NADP(+) as a cofactor.

It carries out the reaction ADP-D-glycero-beta-D-manno-heptose = ADP-L-glycero-beta-D-manno-heptose. It functions in the pathway nucleotide-sugar biosynthesis; ADP-L-glycero-beta-D-manno-heptose biosynthesis; ADP-L-glycero-beta-D-manno-heptose from D-glycero-beta-D-manno-heptose 7-phosphate: step 4/4. The protein operates within bacterial outer membrane biogenesis; LPS core biosynthesis. Catalyzes the interconversion between ADP-D-glycero-beta-D-manno-heptose and ADP-L-glycero-beta-D-manno-heptose via an epimerization at carbon 6 of the heptose. The chain is ADP-L-glycero-D-manno-heptose-6-epimerase from Vibrio parahaemolyticus serotype O3:K6 (strain RIMD 2210633).